Consider the following 149-residue polypeptide: Large ribosomal subunit protein bL9 (149 aa).

It belongs to the bacterial ribosomal protein bL9 family.

In terms of biological role, binds to the 23S rRNA. The chain is Large ribosomal subunit protein bL9 from Glaesserella parasuis serovar 5 (strain SH0165) (Haemophilus parasuis).